Here is a 914-residue protein sequence, read N- to C-terminus: Calcium-activated chloride channel regulator 1 (914 aa).

An N-terminal signal peptide occupies residues 1–21 (MGPFKSSVFILILHLLEGALS). A metalloprotease domain region spans residues 46–199 (DETLIQQIKD…GITGTNVVKK (154 aa)). His156 contacts Zn(2+). Glu157 is an active-site residue. Positions 160 and 167 each coordinate Zn(2+). Residues 306-475 (IVCLVLDKSG…NGLIDAFGAL (170 aa)) enclose the VWFA domain. N-linked (GlcNAc...) asparagine glycans are attached at residues Asn503, Asn585, Asn770, Asn804, Asn810, Asn831, Asn836, and Asn890.

This sequence belongs to the CLCR family. In terms of processing, glycosylated. The 125-kDa product is autoproteolytically processed by the metalloprotease domain and yields to two cell-surface-associated subunits, a 90-kDa protein and a group of 37- to 41-kDa proteins. The cleavage is necessary for calcium-activated chloride channel (CaCC) activation activity. As to expression, highly expressed in small intestine and colon namely in intestinal basal crypt epithelia and goblet cells, and appendix. Weakly expressed in uterus, testis and kidney. Expressed in the airways epithelium of both asthmatic and healthy patients. Expressed in the bronchial epithelium, especially in mucus-producing goblet cells. Expressed in normal turbinate mucosa and nasal polyp. Expressed in.

Its subcellular location is the secreted. The protein localises to the extracellular space. The protein resides in the cell membrane. Functionally, may be involved in mediating calcium-activated chloride conductance. May play critical roles in goblet cell metaplasia, mucus hypersecretion, cystic fibrosis and AHR. May be involved in the regulation of mucus production and/or secretion by goblet cells. Involved in the regulation of tissue inflammation in the innate immune response. May play a role as a tumor suppressor. Induces MUC5AC. This Homo sapiens (Human) protein is Calcium-activated chloride channel regulator 1 (CLCA1).